We begin with the raw amino-acid sequence, 501 residues long: Glycerol kinase (501 aa).

Thr-16 contributes to the ADP binding site. ATP is bound by residues Thr-16, Thr-17, and Ser-18. Thr-16 is a binding site for sn-glycerol 3-phosphate. ADP is bound at residue Arg-20. The sn-glycerol 3-phosphate site is built by Arg-84, Glu-85, Tyr-135, and Asp-242. The glycerol site is built by Arg-84, Glu-85, Tyr-135, Asp-242, and Gln-243. 2 residues coordinate ADP: Thr-264 and Gly-307. Residues Thr-264, Gly-307, Gln-311, and Gly-408 each contribute to the ATP site. Position 408 (Gly-408) interacts with ADP.

It belongs to the FGGY kinase family.

It catalyses the reaction glycerol + ATP = sn-glycerol 3-phosphate + ADP + H(+). The protein operates within polyol metabolism; glycerol degradation via glycerol kinase pathway; sn-glycerol 3-phosphate from glycerol: step 1/1. In terms of biological role, key enzyme in the regulation of glycerol uptake and metabolism. Catalyzes the phosphorylation of glycerol to yield sn-glycerol 3-phosphate. The polypeptide is Glycerol kinase (Saccharolobus islandicus (strain L.S.2.15 / Lassen #1) (Sulfolobus islandicus)).